The chain runs to 192 residues: Ribosome maturation factor RimM (192 aa).

The PRC barrel domain maps to 115-189 (EGEYYLSDLI…RIEITPPKGL (75 aa)).

The protein belongs to the RimM family. In terms of assembly, binds ribosomal protein uS19.

The protein resides in the cytoplasm. An accessory protein needed during the final step in the assembly of 30S ribosomal subunit, possibly for assembly of the head region. Essential for efficient processing of 16S rRNA. May be needed both before and after RbfA during the maturation of 16S rRNA. It has affinity for free ribosomal 30S subunits but not for 70S ribosomes. The chain is Ribosome maturation factor RimM from Acaryochloris marina (strain MBIC 11017).